A 23-amino-acid polypeptide reads, in one-letter code: Magainin-R2 (23 aa).

In terms of tissue distribution, expressed by the skin glands.

The protein resides in the secreted. Antimicrobial peptide. This chain is Magainin-R2, found in Xenopus ruwenzoriensis (Uganda clawed frog).